Here is a 65-residue protein sequence, read N- to C-terminus: Putative antitoxin VapB7 (65 aa).

Belongs to the UPF0165 family.

Its function is as follows. Possibly the antitoxin component of a type II toxin-antitoxin (TA) system. Its cognate toxin is VapC7 (Potential). In Archaeoglobus fulgidus (strain ATCC 49558 / DSM 4304 / JCM 9628 / NBRC 100126 / VC-16), this protein is Putative antitoxin VapB7 (vapB7).